Here is a 128-residue protein sequence, read N- to C-terminus: MAKRKVARKRDKKNIPSGVAHIQATFNNTIVTITDPSGAVVSWSSAGVVGFKGSRKSTPFAAQLAAEDAAKKAMEHGMRNVEVYVKGPGSGRESALRALQGAGLNVVMLRDVTPVPHNGCRPRKRRRV.

This sequence belongs to the universal ribosomal protein uS11 family. Part of the 30S ribosomal subunit. Interacts with proteins S7 and S18. Binds to IF-3.

Located on the platform of the 30S subunit, it bridges several disparate RNA helices of the 16S rRNA. Forms part of the Shine-Dalgarno cleft in the 70S ribosome. This Desulfatibacillum aliphaticivorans protein is Small ribosomal subunit protein uS11.